The chain runs to 98 residues: NADH-ubiquinone oxidoreductase chain 4L (98 aa).

3 consecutive transmembrane segments (helical) span residues 1–21 (MLPI…GVLI), 29–49 (TLLC…LMIT), and 59–79 (IPLI…ALLV).

The protein belongs to the complex I subunit 4L family. As to quaternary structure, core subunit of respiratory chain NADH dehydrogenase (Complex I) which is composed of 45 different subunits.

It localises to the mitochondrion inner membrane. It catalyses the reaction a ubiquinone + NADH + 5 H(+)(in) = a ubiquinol + NAD(+) + 4 H(+)(out). Functionally, core subunit of the mitochondrial membrane respiratory chain NADH dehydrogenase (Complex I) which catalyzes electron transfer from NADH through the respiratory chain, using ubiquinone as an electron acceptor. Part of the enzyme membrane arm which is embedded in the lipid bilayer and involved in proton translocation. In Phascogale tapoatafa (Common wambenger), this protein is NADH-ubiquinone oxidoreductase chain 4L (MT-ND4L).